A 233-amino-acid polypeptide reads, in one-letter code: Octanoyltransferase (233 aa).

In terms of domain architecture, BPL/LPL catalytic spans 33-216 (GRAQDTVILL…HLVRALSSNG (184 aa)). Substrate contacts are provided by residues 71–78 (RGGRITWH), 146–148 (AIG), and 159–161 (GFA). Residue cysteine 177 is the Acyl-thioester intermediate of the active site.

This sequence belongs to the LipB family.

The protein localises to the cytoplasm. It catalyses the reaction octanoyl-[ACP] + L-lysyl-[protein] = N(6)-octanoyl-L-lysyl-[protein] + holo-[ACP] + H(+). It participates in protein modification; protein lipoylation via endogenous pathway; protein N(6)-(lipoyl)lysine from octanoyl-[acyl-carrier-protein]: step 1/2. Catalyzes the transfer of endogenously produced octanoic acid from octanoyl-acyl-carrier-protein onto the lipoyl domains of lipoate-dependent enzymes. Lipoyl-ACP can also act as a substrate although octanoyl-ACP is likely to be the physiological substrate. This is Octanoyltransferase from Clavibacter michiganensis subsp. michiganensis (strain NCPPB 382).